We begin with the raw amino-acid sequence, 94 residues long: HssA/B-like protein 51 (94 aa).

The interval 1-25 (MTLFSSISSISNPMTNSKSRISSFG) is disordered.

The protein belongs to the hssA/B family.

This chain is HssA/B-like protein 51 (hssl51), found in Dictyostelium discoideum (Social amoeba).